We begin with the raw amino-acid sequence, 441 residues long: Glutamyl-tRNA reductase (441 aa).

Substrate contacts are provided by residues 47–50 (TCNR), Ser104, 109–111 (EAQ), and Gln115. Cys48 (nucleophile) is an active-site residue. 184–189 (GAGEMG) is a binding site for NADP(+).

It belongs to the glutamyl-tRNA reductase family. As to quaternary structure, homodimer.

It catalyses the reaction (S)-4-amino-5-oxopentanoate + tRNA(Glu) + NADP(+) = L-glutamyl-tRNA(Glu) + NADPH + H(+). It participates in porphyrin-containing compound metabolism; protoporphyrin-IX biosynthesis; 5-aminolevulinate from L-glutamyl-tRNA(Glu): step 1/2. Its function is as follows. Catalyzes the NADPH-dependent reduction of glutamyl-tRNA(Glu) to glutamate 1-semialdehyde (GSA). The protein is Glutamyl-tRNA reductase of Myxococcus xanthus (strain DK1622).